Here is a 177-residue protein sequence, read N- to C-terminus: Large ribosomal subunit protein uL5 (177 aa).

The protein belongs to the universal ribosomal protein uL5 family. In terms of assembly, part of the 50S ribosomal subunit; part of the 5S rRNA/L5/L18/L25 subcomplex. Contacts the 5S rRNA and the P site tRNA. Forms a bridge to the 30S subunit in the 70S ribosome.

Its function is as follows. This is one of the proteins that bind and probably mediate the attachment of the 5S RNA into the large ribosomal subunit, where it forms part of the central protuberance. In the 70S ribosome it contacts protein S13 of the 30S subunit (bridge B1b), connecting the 2 subunits; this bridge is implicated in subunit movement. Contacts the P site tRNA; the 5S rRNA and some of its associated proteins might help stabilize positioning of ribosome-bound tRNAs. The protein is Large ribosomal subunit protein uL5 of Ehrlichia canis (strain Jake).